Consider the following 198-residue polypeptide: Peroxiredoxin-2 (198 aa).

The residue at position 2 (A2) is an N-acetylalanine. In terms of domain architecture, Thioredoxin spans 6–164 (ARIGKPAPDF…ALRLVQAFQY (159 aa)). Catalysis depends on C51, which acts as the Cysteine sulfenic acid (-SOH) intermediate. Phosphoserine is present on S112. T182 bears the Phosphothreonine mark. Position 196 is an N6-acetyllysine (K196).

Belongs to the peroxiredoxin family. AhpC/Prx1 subfamily. Homodimer; disulfide-linked, upon oxidation. 5 homodimers assemble to form a ring-like decamer. Interacts with TIPIN. Post-translationally, the enzyme can be inactivated by further oxidation of the cysteine sulfenic acid (C(P)-SOH) to sulphinic acid (C(P)-SO2H) instead of its condensation to a disulfide bond. It can be reactivated by forming a transient disulfide bond with sulfiredoxin SRXN1, which reduces the cysteine sulfinic acid in an ATP- and Mg-dependent manner. Acetylation increases resistance to transition to high molecular-mass complexes. Deacetylated by HDAC6 which decreases reducing activity.

Its subcellular location is the cytoplasm. The enzyme catalyses a hydroperoxide + [thioredoxin]-dithiol = an alcohol + [thioredoxin]-disulfide + H2O. Functionally, thiol-specific peroxidase that catalyzes the reduction of hydrogen peroxide and organic hydroperoxides to water and alcohols, respectively. Plays a role in cell protection against oxidative stress by detoxifying peroxides and as sensor of hydrogen peroxide-mediated signaling events. Might participate in the signaling cascades of growth factors and tumor necrosis factor-alpha by regulating the intracellular concentrations of H(2)O(2). The sequence is that of Peroxiredoxin-2 (PRDX2) from Macaca fascicularis (Crab-eating macaque).